The chain runs to 399 residues: CCA-adding enzyme (399 aa).

ATP contacts are provided by G32 and R35. The CTP site is built by G32 and R35. Residues D45 and D47 each contribute to the Mg(2+) site. The ATP site is built by R116, D159, R162, R165, and R168. CTP contacts are provided by R116, D159, R162, R165, and R168.

Belongs to the tRNA nucleotidyltransferase/poly(A) polymerase family. Bacterial CCA-adding enzyme type 3 subfamily. In terms of assembly, homodimer. Requires Mg(2+) as cofactor.

The enzyme catalyses a tRNA precursor + 2 CTP + ATP = a tRNA with a 3' CCA end + 3 diphosphate. The catalysed reaction is a tRNA with a 3' CCA end + 2 CTP + ATP = a tRNA with a 3' CCACCA end + 3 diphosphate. Its function is as follows. Catalyzes the addition and repair of the essential 3'-terminal CCA sequence in tRNAs without using a nucleic acid template. Adds these three nucleotides in the order of C, C, and A to the tRNA nucleotide-73, using CTP and ATP as substrates and producing inorganic pyrophosphate. tRNA 3'-terminal CCA addition is required both for tRNA processing and repair. Also involved in tRNA surveillance by mediating tandem CCA addition to generate a CCACCA at the 3' terminus of unstable tRNAs. While stable tRNAs receive only 3'-terminal CCA, unstable tRNAs are marked with CCACCA and rapidly degraded. In Streptococcus pneumoniae serotype 19F (strain G54), this protein is CCA-adding enzyme.